The sequence spans 355 residues: Electron transfer flavoprotein subunit alpha, mitochondrial (355 aa).

295–323 (LYIAVGISGAIQHLAGMKDSKVIVAINKD) is an FAD binding site.

This sequence belongs to the ETF alpha-subunit/FixB family. As to quaternary structure, heterodimer of an alpha and a beta subunit. The cofactor is FAD.

It is found in the mitochondrion matrix. The electron transfer flavoprotein serves as a specific electron acceptor for several dehydrogenases, including five acyl-CoA dehydrogenases, glutaryl-CoA and sarcosine dehydrogenase. It transfers the electrons to the main mitochondrial respiratory chain via ETF-ubiquinone oxidoreductase (ETF dehydrogenase). In Dictyostelium discoideum (Social amoeba), this protein is Electron transfer flavoprotein subunit alpha, mitochondrial (etfa).